A 55-amino-acid chain; its full sequence is UPF0391 membrane protein Neut_2351/Neut_2360 (55 aa).

2 helical membrane passes run 4 to 24 (LAVV…TGVA) and 28 to 48 (AEMA…FWVL).

This sequence belongs to the UPF0391 family.

Its subcellular location is the cell membrane. The polypeptide is UPF0391 membrane protein Neut_2351/Neut_2360 (Nitrosomonas eutropha (strain DSM 101675 / C91 / Nm57)).